A 236-amino-acid chain; its full sequence is Phosphoribosylaminoimidazole-succinocarboxamide synthase (236 aa).

The protein belongs to the SAICAR synthetase family.

It carries out the reaction 5-amino-1-(5-phospho-D-ribosyl)imidazole-4-carboxylate + L-aspartate + ATP = (2S)-2-[5-amino-1-(5-phospho-beta-D-ribosyl)imidazole-4-carboxamido]succinate + ADP + phosphate + 2 H(+). It functions in the pathway purine metabolism; IMP biosynthesis via de novo pathway; 5-amino-1-(5-phospho-D-ribosyl)imidazole-4-carboxamide from 5-amino-1-(5-phospho-D-ribosyl)imidazole-4-carboxylate: step 1/2. This Hahella chejuensis (strain KCTC 2396) protein is Phosphoribosylaminoimidazole-succinocarboxamide synthase.